The sequence spans 284 residues: D-tagatose-1,6-bisphosphate aldolase subunit GatY (284 aa).

The active-site Proton donor is Asp82. The Zn(2+) site is built by His83 and His180. Dihydroxyacetone phosphate is bound at residue Gly181. His208 is a binding site for Zn(2+). Dihydroxyacetone phosphate is bound by residues 209–211 (GAS) and 230–233 (NVAT).

The protein belongs to the class II fructose-bisphosphate aldolase family. TagBP aldolase GatY subfamily. In terms of assembly, forms a complex with GatZ. Zn(2+) is required as a cofactor.

It catalyses the reaction D-tagatofuranose 1,6-bisphosphate = D-glyceraldehyde 3-phosphate + dihydroxyacetone phosphate. It participates in carbohydrate metabolism; D-tagatose 6-phosphate degradation; D-glyceraldehyde 3-phosphate and glycerone phosphate from D-tagatose 6-phosphate: step 2/2. Catalytic subunit of the tagatose-1,6-bisphosphate aldolase GatYZ, which catalyzes the reversible aldol condensation of dihydroxyacetone phosphate (DHAP or glycerone-phosphate) with glyceraldehyde 3-phosphate (G3P) to produce tagatose 1,6-bisphosphate (TBP). Requires GatZ subunit for full activity and stability. Is involved in the catabolism of galactitol. The protein is D-tagatose-1,6-bisphosphate aldolase subunit GatY of Escherichia coli O139:H28 (strain E24377A / ETEC).